Consider the following 131-residue polypeptide: Small ribosomal subunit protein uS8 (131 aa).

The protein belongs to the universal ribosomal protein uS8 family. As to quaternary structure, part of the 30S ribosomal subunit. Contacts proteins S5 and S12.

Functionally, one of the primary rRNA binding proteins, it binds directly to 16S rRNA central domain where it helps coordinate assembly of the platform of the 30S subunit. This chain is Small ribosomal subunit protein uS8, found in Chlorobium limicola (strain DSM 245 / NBRC 103803 / 6330).